The primary structure comprises 802 residues: Leucine--tRNA ligase (802 aa).

The 'HIGH' region signature appears at 41–52 (PYPSGQGLHVGH). Positions 580-584 (KMSKS) match the 'KMSKS' region motif. Residue lysine 583 coordinates ATP.

This sequence belongs to the class-I aminoacyl-tRNA synthetase family.

The protein resides in the cytoplasm. It carries out the reaction tRNA(Leu) + L-leucine + ATP = L-leucyl-tRNA(Leu) + AMP + diphosphate. The sequence is that of Leucine--tRNA ligase from Alkaliphilus oremlandii (strain OhILAs) (Clostridium oremlandii (strain OhILAs)).